A 42-amino-acid chain; its full sequence is Aryl-alcohol dehydrogenase (42 aa).

Belongs to the zinc-containing alcohol dehydrogenase family. In terms of assembly, homodimer. Zn(2+) serves as cofactor.

It carries out the reaction an aromatic primary alcohol + NAD(+) = an aromatic aldehyde + NADH + H(+). In terms of biological role, oxidizes primary alcohols with an aromatic or cyclohex-1-ene ring. It is highly specific for benzyl alcohol. The polypeptide is Aryl-alcohol dehydrogenase (Acinetobacter guillouiae (Acinetobacter genomosp. 11)).